The sequence spans 183 residues: Photosystem I assembly protein Ycf4 (183 aa).

2 helical membrane passes run Trp-23–Phe-43 and Val-64–Ile-84.

This sequence belongs to the Ycf4 family.

The protein localises to the plastid. The protein resides in the chloroplast thylakoid membrane. Its function is as follows. Seems to be required for the assembly of the photosystem I complex. This is Photosystem I assembly protein Ycf4 from Stigeoclonium helveticum (Green alga).